A 138-amino-acid chain; its full sequence is Large ribosomal subunit protein uL16 (138 aa).

The protein belongs to the universal ribosomal protein uL16 family. In terms of assembly, part of the 50S ribosomal subunit.

Binds 23S rRNA and is also seen to make contacts with the A and possibly P site tRNAs. This Chlamydia caviae (strain ATCC VR-813 / DSM 19441 / 03DC25 / GPIC) (Chlamydophila caviae) protein is Large ribosomal subunit protein uL16.